Reading from the N-terminus, the 199-residue chain is MAKVLVLYYSSYGHIEKMAEAVAAGARDAGAEVTIKRVPELVPEEVARKSGMKLDQPAPVATVGELPDYDAIIFGTPTRFGNMASQMRNFLDQTGGLWMSGKLVGKVGSVFASTATQHGGQETTITSFHTTLLHHGMVIVGLPYTEARQMNMDEITGGSPYGATTLAKGDGTRQPSENELAMARFQGGHVAKIAAKLAG.

In terms of domain architecture, Flavodoxin-like spans 4-190 (VLVLYYSSYG…AMARFQGGHV (187 aa)). Residues 10–15 (SSYGHI) and 78–80 (TRF) contribute to the FMN site. Residue tyrosine 12 participates in NAD(+) binding. Residue tryptophan 98 coordinates substrate. Residues 113–119 (STATQHG) and histidine 134 contribute to the FMN site.

Belongs to the WrbA family. FMN serves as cofactor.

It catalyses the reaction a quinone + NADH + H(+) = a quinol + NAD(+). The catalysed reaction is a quinone + NADPH + H(+) = a quinol + NADP(+). The polypeptide is NAD(P)H dehydrogenase (quinone) (Azoarcus sp. (strain BH72)).